Reading from the N-terminus, the 459-residue chain is Ribulose bisphosphate carboxylase large chain (459 aa).

The residue at position 4 (Lys4) is an N6,N6,N6-trimethyllysine. Residues Asn113 and Thr163 each coordinate substrate. Lys165 functions as the Proton acceptor in the catalytic mechanism. Lys167 contacts substrate. Mg(2+) is bound by residues Lys191, Asp193, and Glu194. N6-carboxylysine is present on Lys191. The Proton acceptor role is filled by His284. Substrate contacts are provided by Arg285, His317, and Ser369.

This sequence belongs to the RuBisCO large chain family. Type I subfamily. In terms of assembly, heterohexadecamer of 8 large chains and 8 small chains; disulfide-linked. The disulfide link is formed within the large subunit homodimers. Mg(2+) is required as a cofactor. The disulfide bond which can form in the large chain dimeric partners within the hexadecamer appears to be associated with oxidative stress and protein turnover.

The protein resides in the plastid. Its subcellular location is the chloroplast. The catalysed reaction is 2 (2R)-3-phosphoglycerate + 2 H(+) = D-ribulose 1,5-bisphosphate + CO2 + H2O. It catalyses the reaction D-ribulose 1,5-bisphosphate + O2 = 2-phosphoglycolate + (2R)-3-phosphoglycerate + 2 H(+). Functionally, ruBisCO catalyzes two reactions: the carboxylation of D-ribulose 1,5-bisphosphate, the primary event in carbon dioxide fixation, as well as the oxidative fragmentation of the pentose substrate in the photorespiration process. Both reactions occur simultaneously and in competition at the same active site. This Geum quellyon (Chilean avens) protein is Ribulose bisphosphate carboxylase large chain.